The following is a 930-amino-acid chain: Protocadherin gamma-B6 (930 aa).

The signal sequence occupies residues 1–30 (MGGSCAQRRRAGPRQVLFPLLLPLFYPTLS). Cadherin domains lie at 31 to 133 (EPIR…APQF), 134 to 242 (DKKE…PPVF), 243 to 347 (SRDE…SPEI), 348 to 452 (IITS…APVF), 453 to 562 (DQTS…APRV), and 570 to 675 (DGSA…LPDL). Residues 31–691 (EPIRYSIPEE…SDPQAELQFY (661 aa)) are Extracellular-facing. N-linked (GlcNAc...) asparagine glycans are attached at residues Asn304, Asn419, and Asn545. Residues 692 to 712 (LVVALALISVLFLLAVILAIA) traverse the membrane as a helical segment. Topologically, residues 713-930 (LRLRRSLSPA…KKKSGKKEKK (218 aa)) are cytoplasmic. Disordered regions lie at residues 791–839 (PHGG…WPNN) and 900–930 (ATLT…KEKK). A compositionally biased stretch (polar residues) spans 800 to 839 (HPETLTSQAPPNTDWRFSQAQRPGTSGSQNGDDTGTWPNN). Residues 920-930 (NKKKSGKKEKK) are compositionally biased toward basic residues.

Its subcellular location is the cell membrane. Potential calcium-dependent cell-adhesion protein. May be involved in the establishment and maintenance of specific neuronal connections in the brain. This is Protocadherin gamma-B6 (PCDHGB6) from Homo sapiens (Human).